The chain runs to 481 residues: MTFRFDNSYARDLEGFYVDWPAAPVPAPRLLRLNRPLAEELGLDPDLLEREGAEIFSGRRLPEGAHPLAQAYAGHQFGGFSPQLGDGRALLIGEITDRAGRRRDLQLKGSGRTPFSRGADGKAALGPVLREYLVGEAMHGLGIPTTRALAAVATGEPLLRQEGERPGAILTRVAASHIRVGTFQFFAARSDIDRVRRLADYAIARHYPELASAPEPYLAFYEAVAEAQAQLVARWMLVGFIHGVMNTDNMTISGETIDYGPCAFMEGYDPGTVFSSIDLQGRYAYGNQPYILAWNLARLGEALLPLLDGDPVRAADKATSVLETVGARYQGHWLAGMRAKLGLAGAEEGDARLAEDLLEAMRSQRADWTLTFRRLAEAVTDEGALRPLFRDPAALAGWLPRWRARLAPDAAERMRATNPIYIARNHRVEEALAAAHAGDLAPFDRLLEALADPFTERADRELFALPAPEGFDDSYRTFCGT.

ATP contacts are provided by G85, G87, R88, K108, D120, G121, R172, and R179. The active-site Proton acceptor is the D248. Positions 249 and 258 each coordinate Mg(2+). D258 serves as a coordination point for ATP.

It belongs to the SELO family. The cofactor is Mg(2+). Requires Mn(2+) as cofactor.

The catalysed reaction is L-seryl-[protein] + ATP = 3-O-(5'-adenylyl)-L-seryl-[protein] + diphosphate. It carries out the reaction L-threonyl-[protein] + ATP = 3-O-(5'-adenylyl)-L-threonyl-[protein] + diphosphate. The enzyme catalyses L-tyrosyl-[protein] + ATP = O-(5'-adenylyl)-L-tyrosyl-[protein] + diphosphate. It catalyses the reaction L-histidyl-[protein] + UTP = N(tele)-(5'-uridylyl)-L-histidyl-[protein] + diphosphate. The catalysed reaction is L-seryl-[protein] + UTP = O-(5'-uridylyl)-L-seryl-[protein] + diphosphate. It carries out the reaction L-tyrosyl-[protein] + UTP = O-(5'-uridylyl)-L-tyrosyl-[protein] + diphosphate. In terms of biological role, nucleotidyltransferase involved in the post-translational modification of proteins. It can catalyze the addition of adenosine monophosphate (AMP) or uridine monophosphate (UMP) to a protein, resulting in modifications known as AMPylation and UMPylation. The chain is Protein nucleotidyltransferase YdiU from Cereibacter sphaeroides (strain ATCC 17023 / DSM 158 / JCM 6121 / CCUG 31486 / LMG 2827 / NBRC 12203 / NCIMB 8253 / ATH 2.4.1.) (Rhodobacter sphaeroides).